Reading from the N-terminus, the 394-residue chain is Elongation factor Tu (394 aa).

The region spanning 10 to 204 is the tr-type G domain; the sequence is KPHVNVGTIG…HLDTYIPEPE (195 aa). Residues 19–26 form a G1 region; the sequence is GHVDHGKT. 19 to 26 is a GTP binding site; the sequence is GHVDHGKT. Threonine 26 contributes to the Mg(2+) binding site. Positions 60–64 are G2; sequence GITIN. Positions 81-84 are G3; it reads DCPG. GTP is bound by residues 81–85 and 136–139; these read DCPGH and NKCD. A G4 region spans residues 136 to 139; sequence NKCD. A G5 region spans residues 174–176; sequence SAL.

It belongs to the TRAFAC class translation factor GTPase superfamily. Classic translation factor GTPase family. EF-Tu/EF-1A subfamily. Monomer.

The protein resides in the cytoplasm. The catalysed reaction is GTP + H2O = GDP + phosphate + H(+). Functionally, GTP hydrolase that promotes the GTP-dependent binding of aminoacyl-tRNA to the A-site of ribosomes during protein biosynthesis. This Aeromonas salmonicida (strain A449) protein is Elongation factor Tu.